A 678-amino-acid chain; its full sequence is Proprotein convertase subtilisin/kexin type 4 (678 aa).

The first 26 residues, 1-26 (MRPSQTALWLGLVLSLALLAVGWASA), serve as a signal peptide directing secretion. Residues 27 to 110 (RPPIYVSSWA…QQTLRRRVKR (84 aa)) constitute a propeptide that is removed on maturation. The region spanning 123 to 437 (QWYMNKEIEQ…YGLLDAGLLV (315 aa)) is the Peptidase S8 domain. Residues aspartate 155, histidine 196, and serine 370 each act as charge relay system in the active site. The 135-residue stretch at 446–580 (TKPQKKCTIR…TLLLYGTAED (135 aa)) folds into the P/Homo B domain. N-linked (GlcNAc...) asparagine glycosylation occurs at asparagine 472.

Belongs to the peptidase S8 family. Furin subfamily. As to quaternary structure, the proPCSK4 form interacts with HSPA5; the interaction takes place at the endoplasmic reticulum. In terms of processing, N-glycosylated. Post-translationally, synthesized in the endoplasmic reticulum as a zymogen, is matured by autocatalytic cleavage between the prodomain and the catalytic domain. Expressed abundantly in the testis. High levels seen in germ cells but not in Leydig, Sertoli or peritubular cells. Expressed in the pachytene spermatocytes and the round spermatids but not in the elongating spermatids. May be expressed within hormonally stimulated ovaries.

The protein localises to the cytoplasmic vesicle. It is found in the secretory vesicle. Its subcellular location is the acrosome membrane. In terms of biological role, proprotein convertase involved in the processing of hormone and other protein precursors at sites comprised of pairs of basic amino acid residues. In males, important for ADAM2 processing as well as other acrosomal proteins with roles in fertilization and critical for normal fertilization events such as sperm capacitation, acrosome reaction and binding of sperm to zona pellucida. Plays also a role in female fertility, involved in the regulation of trophoblast migration and placental development, may be through the proteolytical processing and activation of proteins such as IGF2. May also participate in folliculogenesis in the ovaries. The sequence is that of Proprotein convertase subtilisin/kexin type 4 (Pcsk4) from Rattus norvegicus (Rat).